A 1080-amino-acid chain; its full sequence is Carbamoyl phosphate synthase large chain (1080 aa).

Residues 1 to 403 (MPKRTDLETI…SLQKALRGLE (403 aa)) are carboxyphosphate synthetic domain. ATP is bound by residues R129, R169, G175, G176, E208, V210, E215, G241, V242, H243, Q285, and E299. Positions 133–328 (RVAMGEIGLD…IAKVAAKLAV (196 aa)) constitute an ATP-grasp 1 domain. Mg(2+) is bound by residues Q285, E299, and N301. Q285, E299, and N301 together coordinate Mn(2+). An oligomerization domain region spans residues 404-554 (TGKIGLDPTG…YSTYEDECEA (151 aa)). Positions 555–942 (LPTDRDKIMI…AFARAQEAGG (388 aa)) are carbamoyl phosphate synthetic domain. Residues 679 to 876 (QQLVDKLGLK…LAKIAARCMA (198 aa)) form the ATP-grasp 2 domain. Residues R715, R754, L756, E761, G787, V788, H789, S790, Q830, and E847 each contribute to the ATP site. Mg(2+) is bound by residues Q830, E847, and N849. Residues Q830, E847, and N849 each contribute to the Mn(2+) site. The MGS-like domain maps to 943 to 1080 (IKAPPLGKAF…LQELHKELEA (138 aa)). Residues 943-1080 (IKAPPLGKAF…LQELHKELEA (138 aa)) form an allosteric domain region.

The protein belongs to the CarB family. In terms of assembly, composed of two chains; the small (or glutamine) chain promotes the hydrolysis of glutamine to ammonia, which is used by the large (or ammonia) chain to synthesize carbamoyl phosphate. Tetramer of heterodimers (alpha,beta)4. The cofactor is Mg(2+). It depends on Mn(2+) as a cofactor.

The catalysed reaction is hydrogencarbonate + L-glutamine + 2 ATP + H2O = carbamoyl phosphate + L-glutamate + 2 ADP + phosphate + 2 H(+). It catalyses the reaction hydrogencarbonate + NH4(+) + 2 ATP = carbamoyl phosphate + 2 ADP + phosphate + 2 H(+). It functions in the pathway amino-acid biosynthesis; L-arginine biosynthesis; carbamoyl phosphate from bicarbonate: step 1/1. The protein operates within pyrimidine metabolism; UMP biosynthesis via de novo pathway; (S)-dihydroorotate from bicarbonate: step 1/3. Large subunit of the glutamine-dependent carbamoyl phosphate synthetase (CPSase). CPSase catalyzes the formation of carbamoyl phosphate from the ammonia moiety of glutamine, carbonate, and phosphate donated by ATP, constituting the first step of 2 biosynthetic pathways, one leading to arginine and/or urea and the other to pyrimidine nucleotides. The large subunit (synthetase) binds the substrates ammonia (free or transferred from glutamine from the small subunit), hydrogencarbonate and ATP and carries out an ATP-coupled ligase reaction, activating hydrogencarbonate by forming carboxy phosphate which reacts with ammonia to form carbamoyl phosphate. This Xanthomonas axonopodis pv. citri (strain 306) protein is Carbamoyl phosphate synthase large chain.